The chain runs to 210 residues: Urease accessory protein UreF (210 aa).

Belongs to the UreF family. As to quaternary structure, ureD, UreF and UreG form a complex that acts as a GTP-hydrolysis-dependent molecular chaperone, activating the urease apoprotein by helping to assemble the nickel containing metallocenter of UreC. The UreE protein probably delivers the nickel.

The protein localises to the cytoplasm. Its function is as follows. Required for maturation of urease via the functional incorporation of the urease nickel metallocenter. The polypeptide is Urease accessory protein UreF (Cereibacter sphaeroides (strain ATCC 17029 / ATH 2.4.9) (Rhodobacter sphaeroides)).